We begin with the raw amino-acid sequence, 264 residues long: Probable aquaporin TIP3-1 (264 aa).

The next 2 helical transmembrane spans lie at 28–48 (AAISEFLATAIFVFAAEGSIL) and 62–82 (GLVAVSLAHALALAVAVAVAV). The short motif at 90-92 (NPA) is the NPA 1 element. 3 consecutive transmembrane segments (helical) span residues 105-125 (LIRALFYWLAQLLGAVVATLL), 149-169 (AVLLEATMTFGLMYAYYATVI), and 176-196 (VGTIAPLAVGFLLGANMLAGG). Residues 204 to 206 (NPA) carry the NPA 2 motif. Residues 224-244 (YWLGPFVGAGLAGLLYEYLVI) form a helical membrane-spanning segment.

The protein belongs to the MIP/aquaporin (TC 1.A.8) family. TIP (TC 1.A.8.10) subfamily. In terms of tissue distribution, expressed in leaves and at lower levels in roots.

It is found in the vacuole membrane. Functionally, aquaporins facilitate the transport of water and small neutral solutes across cell membranes. May be involved in transport from the vacuolar compartment to the cytoplasm. The sequence is that of Probable aquaporin TIP3-1 (TIP3-1) from Oryza sativa subsp. japonica (Rice).